A 96-amino-acid polypeptide reads, in one-letter code: UPF0235 protein NT01EI_0281 (96 aa).

This sequence belongs to the UPF0235 family.

This is UPF0235 protein NT01EI_0281 from Edwardsiella ictaluri (strain 93-146).